The sequence spans 102 residues: Keratinocyte differentiation-associated protein (102 aa).

Positions 1–22 (MKIPILPVVALLSLLALHAVQG) are cleaved as a signal peptide.

In terms of tissue distribution, expression restricted to suprabasal keratinocytes of the epidermis.

The protein resides in the secreted. May act as a soluble regulator of keratinocyte differentiation. May play an important role in embryonic skin morphogenesis. The sequence is that of Keratinocyte differentiation-associated protein from Mus musculus (Mouse).